We begin with the raw amino-acid sequence, 305 residues long: Serine/threonine-protein phosphatase 6 catalytic subunit (305 aa).

Methionine 1 is subject to N-acetylmethionine. Mn(2+) contacts are provided by aspartate 53, histidine 55, aspartate 81, and asparagine 113. Histidine 114 acts as the Proton donor in catalysis. Mn(2+)-binding residues include histidine 163 and histidine 237.

This sequence belongs to the PPP phosphatase family. PP-6 (PP-V) subfamily. In terms of assembly, protein phosphatase 6 (PP6) holoenzyme is proposed to be a heterotrimeric complex formed by the catalytic subunit, a SAPS domain-containing subunit (PP6R) and an ankyrin repeat-domain containing regulatory subunit (ARS). Interacts with subunits PPP6R1, PPP6R2 and PPP6R3. Interacts with subunit ANKRD28. Interacts with IGBP1. Interacts with MAP3K7. Interacts with NFKBIE. Interacts with TRIM14 and WRNIP1; these interactions positively regulate the RIG-I signaling pathway. Mn(2+) serves as cofactor. Ubiquitously expressed in all tissues tested with strongest expression in lung, spleen, liver, kidney and brain. Weaker expression observed in bladder, pancreas, heart and skeletal muscle.

It localises to the mitochondrion. It is found in the cytoplasm. The enzyme catalyses O-phospho-L-seryl-[protein] + H2O = L-seryl-[protein] + phosphate. The catalysed reaction is O-phospho-L-threonyl-[protein] + H2O = L-threonyl-[protein] + phosphate. Its function is as follows. Catalytic subunit of protein phosphatase 6 (PP6). PP6 is a component of a signaling pathway regulating cell cycle progression in response to IL2 receptor stimulation. N-terminal domain restricts G1 to S phase progression in cancer cells, in part through control of cyclin D13 During mitosis, regulates spindle positioning. Down-regulates MAP3K7 kinase activation of the IL1 signaling pathway by dephosphorylation of MAP3K7. Acts as a regulator of innate immunity by mediating dephosphorylation CGAS, STING1 and RIGI. Also participates in the innate immune defense against viruses by desphosphorylating RIGI, an essential step that triggers RIGI-mediated signaling activation. Also regulates innate immunity by acting as a negative regulator of the cGAS-STING pathway: mediates dephosphorylation and inactivation of CGAS and STING1. CGAS dephosphorylation at 'Ser-420' impairs its ability to bind GTP, thereby inactivating it. The polypeptide is Serine/threonine-protein phosphatase 6 catalytic subunit (Mus musculus (Mouse)).